The chain runs to 77 residues: UPF0154 protein LCK_00994 (77 aa).

A helical membrane pass occupies residues Phe5–Ala25. A disordered region spans residues Ser50–Lys77.

Belongs to the UPF0154 family.

The protein resides in the cell membrane. In Leuconostoc citreum (strain KM20), this protein is UPF0154 protein LCK_00994.